A 220-amino-acid polypeptide reads, in one-letter code: Ribonuclease HII (220 aa).

In terms of domain architecture, RNase H type-2 spans 32–220; the sequence is KHIAGIDEAG…FAPIKGRFDC (189 aa). Positions 38, 39, and 130 each coordinate a divalent metal cation.

This sequence belongs to the RNase HII family. Mn(2+) is required as a cofactor. Mg(2+) serves as cofactor.

It localises to the cytoplasm. The enzyme catalyses Endonucleolytic cleavage to 5'-phosphomonoester.. In terms of biological role, endonuclease that specifically degrades the RNA of RNA-DNA hybrids. The sequence is that of Ribonuclease HII from Brucella ovis (strain ATCC 25840 / 63/290 / NCTC 10512).